A 2070-amino-acid chain; its full sequence is MLEAIDKNRALHAAERLQTKLRERGDVANEDKLSLLKSVLQSPLFSQILSLQTSVQQLKDQVNIATSATSNIEYAHVPHLSPAVIPTLQNESFLLSPNNGNLEALTGPGIPHINGKPACDEFDQLIKNMAQGRHVEVFELLKPPSGGLGFSVVGLRSENRGELGIFVQEIQEGSVAHRDGRLKETDQILAINGQALDQTITHQQAISILQKAKDTVQLVIARGSLPQLVSPIVSRSPSAASTISAHSNPVHWQHMETIELVNDGSGLGFGIIGGKATGVIVKTILPGGVADQHGRLCSGDHILKIGDTDLAGMSSEQVAQVLRQCGNRVKLMIARGAIEERTAPTALGITLSSSPTSTPELRVDASTQKGEESETFDVELTKNVQGLGITIAGYIGDKKLEPSGIFVKSITKSSAVEHDGRIQIGDQIIAVDGTNLQGFTNQQAVEVLRHTGQTVLLTLMRRGMKQEAELMSREDVTKDADLSPVNASIIKENYEKDEDFLSSTRNTNILPTEEEGYPLLSAEIEEIEDAQKQEAALLTKWQRIMGINYEIVVAHVSKFSENSGLGISLEATVGHHFIRSVLPEGPVGHSGKLFSGDELLEVNGITLLGENHQDVVNILKELPIEVTMVCCRRTVPPTTQSELDSLDLCDIELTEKPHVDLGEFIGSSETEDPVLAMTDAGQSTEEVQAPLAMWEAGIQHIELEKGSKGLGFSILDYQDPIDPASTVIIIRSLVPGGIAEKDGRLLPGDRLMFVNDVNLENSSLEEAVEALKGAPSGTVRIGVAKPLPLSPEEGYVSAKEDSFLYPPHSCEEAGLADKPLFRADLALVGTNDADLVDESTFESPYSPENDSIYSTQASILSLHGSSCGDGLNYGSSLPSSPPKDVIENSCDPVLDLHMSLEELYTQNLLQRQDENTPSVDISMGPASGFTINDYTPANAIEQQYECENTIVWTESHLPSEVISSAELPSVLPDSAGKGSEYLLEQSSLACNAECVMLQNVSKESFERTINIAKGNSSLGMTVSANKDGLGMIVRSIIHGGAISRDGRIAIGDCILSINEESTISVTNAQARAMLRRHSLIGPDIKITYVPAEHLEEFKISLGQQSGRVMALDIFSSYTGRDIPELPEREEGEGEESELQNTAYSNWNQPRRVELWREPSKSLGISIVGGRGMGSRLSNGEVMRGIFIKHVLEDSPAGKNGTLKPGDRIVEVDGMDLRDASHEQAVEAIRKAGNPVVFMVQSIINRPRKSPLPSLLHNLYPKYNFSSTNPFADSLQINADKAPSQSESEPEKAPLCSVPPPPPSAFAEMGSDHTQSSASKISQDVDKEDEFGYSWKNIRERYGTLTGELHMIELEKGHSGLGLSLAGNKDRSRMSVFIVGIDPNGAAGKDGRLQIADELLEINGQILYGRSHQNASSIIKCAPSKVKIIFIRNKDAVNQMAVCPGNAVEPLPSNSENLQNKETEPTVTTSDAAVDLSSFKNVQHLELPKDQGGLGIAISEEDTLSGVIIKSLTEHGVAATDGRLKVGDQILAVDDEIVVGYPIEKFISLLKTAKMTVKLTIHAENPDSQAVPSAAGAASGEKKNSSQSLMVPQSGSPEPESIRNTSRSSTPAIFASDPATCPIIPGCETTIEISKGRTGLGLSIVGGSDTLLGAIIIHEVYEEGAACKDGRLWAGDQILEVNGIDLRKATHDEAINVLRQTPQRVRLTLYRDEAPYKEEEVCDTLTIELQKKPGKGLGLSIVGKRNDTGVFVSDIVKGGIADADGRLMQGDQILMVNGEDVRNATQEAVAALLKCSLGTVTLEVGRIKAGPFHSERRPSQSSQVSEGSLSSFTFPLSGSSTSESLESSSKKNALASEIQGLRTVEMKKGPTDSLGISIAGGVGSPLGDVPIFIAMMHPTGVAAQTQKLRVGDRIVTICGTSTEGMTHTQAVNLLKNASGSIEMQVVAGGDVSVVTGHQQEPASSSLSFTGLTSSSIFQDDLGPPQCKSITLERGPDGLGFSIVGGYGSPHGDLPIYVKTVFAKGAASEDGRLKRGDQIIAVNGQSLEGVTHEEAVAILKRTKGTVTLMVLS.

The L27 domain maps to Met-1 to Asn-63. One can recognise a PDZ 1 domain in the interval Val-137–Ser-224. Residue Ser-230 is modified to Phosphoserine. 2 consecutive PDZ domains span residues Thr-257–Ala-337 and Asp-377–Gly-463. Residue Ser-483 is modified to Phosphoserine. 2 PDZ domains span residues Val-553–Thr-634 and His-700–Pro-786. Residues Ser-790 and Ser-1078 each carry the phosphoserine modification. One can recognise a PDZ 6 domain in the interval Thr-1008–Val-1089. A disordered region spans residues Asp-1121–Asn-1140. In terms of domain architecture, PDZ 7 spans Arg-1151–Ile-1243. Arg-1170 carries the post-translational modification Omega-N-methylarginine. The interval Ala-1278–Val-1324 is disordered. The span at Asp-1311–Ser-1321 shows a compositional bias: polar residues. PDZ domains are found at residues Met-1350–Lys-1433 and His-1483–Asn-1564. The tract at residues Ser-1567 to Ile-1612 is disordered. Positions Ser-1584–Pro-1610 are enriched in polar residues. PDZ domains lie at Thr-1629–Glu-1712 and Thr-1725–Lys-1807. Ser-1818 and Ser-1824 each carry phosphoserine. PDZ domains follow at residues Thr-1862–Gly-1948 and Ser-1987–Ser-2070.

Interacts with CLDN5, DLG4, GRIN1, F11R/JAM, CLDN1, NG2, CRB1, MPP4 and PALS1. Interacts with HTR2A, HTR2B, HTR2C, PLEKHA1/TAPP1, PLEKHA2/TAPP2, CXADR, SYNGAP1, CAMK2A and CAMK2B. Interacts with FAT4 (via cytoplasmic domain). Interacts with DLL1. As to quaternary structure, (Microbial infection) Interacts with human adenovirus type 9 E4-ORF1 protein. In terms of assembly, (Microbial infection) Interacts with human papillomavirus 18/HPV18 protein E6. In terms of tissue distribution, expressed in heart, brain, placenta, liver, skeletal muscle, kidney and pancreas.

The protein localises to the cell membrane. The protein resides in the apical cell membrane. It localises to the postsynaptic density. Its subcellular location is the cell projection. It is found in the dendrite. The protein localises to the cell junction. The protein resides in the tight junction. It localises to the synapse. Its subcellular location is the synaptosome. Its function is as follows. Member of the NMDAR signaling complex that may play a role in control of AMPAR potentiation and synaptic plasticity in excitatory synapses. Promotes clustering of HT2RC at the cell surface. The polypeptide is Multiple PDZ domain protein (MPDZ) (Homo sapiens (Human)).